The chain runs to 147 residues: DNA base-flipping protein (147 aa).

It belongs to the MGMT family. ATL subfamily. As to quaternary structure, interacts with several proteins, including UvrA, UvrD and the three subunits of the RNA polymerase.

Involved in DNA damage recognition. Binds DNA containing O(6)-methylguanine and larger O(6)-alkylguanine adducts. Binds to the damaged base and flips the base out of the DNA duplex into an extrahelical conformation, which allows processing by repair proteins. Also affects the regulation of gene expression in response to alkylation. This chain is DNA base-flipping protein, found in Thermus thermophilus (strain ATCC 27634 / DSM 579 / HB8).